A 101-amino-acid polypeptide reads, in one-letter code: NAD(P)H-quinone oxidoreductase subunit 4L, chloroplastic (101 aa).

3 helical membrane-spanning segments follow: residues 2 to 22, 32 to 52, and 61 to 81; these read MLEH…YGLI, MCLE…SDLF, and IFSI…PAIV.

This sequence belongs to the complex I subunit 4L family. As to quaternary structure, NDH is composed of at least 16 different subunits, 5 of which are encoded in the nucleus.

The protein localises to the plastid. Its subcellular location is the chloroplast thylakoid membrane. It carries out the reaction a plastoquinone + NADH + (n+1) H(+)(in) = a plastoquinol + NAD(+) + n H(+)(out). It catalyses the reaction a plastoquinone + NADPH + (n+1) H(+)(in) = a plastoquinol + NADP(+) + n H(+)(out). Its function is as follows. NDH shuttles electrons from NAD(P)H:plastoquinone, via FMN and iron-sulfur (Fe-S) centers, to quinones in the photosynthetic chain and possibly in a chloroplast respiratory chain. The immediate electron acceptor for the enzyme in this species is believed to be plastoquinone. Couples the redox reaction to proton translocation, and thus conserves the redox energy in a proton gradient. This Nymphaea alba (White water-lily) protein is NAD(P)H-quinone oxidoreductase subunit 4L, chloroplastic.